Here is a 363-residue protein sequence, read N- to C-terminus: Replication factor C subunit 4 (363 aa).

Met-1 is modified (N-acetylmethionine). The disordered stretch occupies residues 1 to 36 (MQAFLKGTSISTKPPLTKDRGVAASAGSSGENKKAK). Residues Lys-6 and Lys-13 each carry the N6-acetyllysine modification. 78-85 (GPPGTGKT) serves as a coordination point for ATP.

This sequence belongs to the activator 1 small subunits family. As to quaternary structure, subunit of the RFC complex, an heteropentameric complex consisting of a large subunit RFC1 and four small subunits RFC2, RFC3, RFC4 and RFC5; the RFC complex interacts with PCNA. Forms an heterotetrameric complex with RFC2, RFC3 and RFC5; this complex has ATPase activity but is not stimulated by PCNA. The heterotetramer of subunits RFC2, RFC3, RFC4 and RFC5 interacts with RAD17. Interacts with ATAD5. Interacts with CTF18. Interacts with CNTD1; this interaction facilitates crossover formation.

Its subcellular location is the nucleus. Subunit of the replication factor C (RFC) complex which acts during elongation of primed DNA templates by DNA polymerases delta and epsilon, and is necessary for ATP-dependent loading of proliferating cell nuclear antigen (PCNA) onto primed DNA. The RFC4 subunit probably functions as a scaffold on which the other complex components can assemble. This is Replication factor C subunit 4 (RFC4) from Homo sapiens (Human).